We begin with the raw amino-acid sequence, 700 residues long: MTNQNRRDFLRLAAGTAGAAALQLFPPVIREALAIPANRRTGTIRDVEHIVILMQENRSFDHYFGKLRGVRGFGDPRPLALQNGKSVFHQPVLLGPAELLPFHPDASNLGMQFLQDLPHGWQDMHGAWNKGRYDRWIANKGTTTMAYLERDDIPFHYQLADAFTICDAYHCSIPSSTDPNRYYMWTGYVGNDGAGGGPVLGNEEAGYGWSTYPETLEQAGVSWKIYQDIGTGLDAAGSWGWTQNPYIGNYGDNSLLYFNQYRNAQPGSPLYDKARTGTNVSAGGTLFDVLQQDVKNGTLPQVSWICAPEAYSEHPNWPANYGAWYVEQVLKALTSNPDVWSKTALFITYDENDGFFDHVAPPFAPQSRENGLSTVSTAGEIFAGDATHMAGPYGLGPRVPMLVVSPWTKGGWVCSQTFDHTSLLQFIEARFNDRYSVRAPNVTPWRRAVCGDLTSAFNFSSPDGSWPQLPDTSGYAPPDRNRHPSYVPVPPAAQSMPKQEAGLRAARALPYELFVLGRIDQSTGKFKLTFANTGRAGAAFQVTAGNRLDGPWAYTVEARKRLSDEWSTALTLSIYDLTVYGPNGFLCQFRGSTAAALGLSANPEVIYGYDVANGNITLRLSNRGRAAVRLTVTNAYGNAAPRVYELKPGQRINDYWDLRDSHSWYDLSVSDGAPNGFLRRFAGHVETGRPSTSDPLIATA.

A signal peptide (tat-type signal) is located at residues 1 to 34 (MTNQNRRDFLRLAAGTAGAAALQLFPPVIREALA).

This sequence belongs to the bacterial phospholipase C family. Predicted to be exported by the Tat system. The position of the signal peptide cleavage has not been experimentally proven.

It carries out the reaction a 1,2-diacyl-sn-glycero-3-phosphocholine + H2O = phosphocholine + a 1,2-diacyl-sn-glycerol + H(+). Its function is as follows. Hydrolyzes phosphatidylserine as well as phosphatidylcholine. This is Non-hemolytic phospholipase C (plcN) from Burkholderia pseudomallei (strain K96243).